The following is a 155-amino-acid chain: Ribonuclease H (155 aa).

Residues 1–142 (MLKQVEIFTD…CDELARAAAM (142 aa)) enclose the RNase H type-1 domain. 4 residues coordinate Mg(2+): D10, E48, D70, and D134.

Belongs to the RNase H family. In terms of assembly, monomer. It depends on Mg(2+) as a cofactor.

The protein localises to the cytoplasm. It carries out the reaction Endonucleolytic cleavage to 5'-phosphomonoester.. In terms of biological role, endonuclease that specifically degrades the RNA of RNA-DNA hybrids. This is Ribonuclease H from Escherichia fergusonii (strain ATCC 35469 / DSM 13698 / CCUG 18766 / IAM 14443 / JCM 21226 / LMG 7866 / NBRC 102419 / NCTC 12128 / CDC 0568-73).